Here is a 429-residue protein sequence, read N- to C-terminus: Glutamate-1-semialdehyde 2,1-aminomutase 1 (429 aa).

Lysine 268 is modified (N6-(pyridoxal phosphate)lysine).

The protein belongs to the class-III pyridoxal-phosphate-dependent aminotransferase family. HemL subfamily. As to quaternary structure, homodimer. Requires pyridoxal 5'-phosphate as cofactor.

It localises to the cytoplasm. It carries out the reaction (S)-4-amino-5-oxopentanoate = 5-aminolevulinate. It functions in the pathway porphyrin-containing compound metabolism; protoporphyrin-IX biosynthesis; 5-aminolevulinate from L-glutamyl-tRNA(Glu): step 2/2. The protein is Glutamate-1-semialdehyde 2,1-aminomutase 1 of Listeria welshimeri serovar 6b (strain ATCC 35897 / DSM 20650 / CCUG 15529 / CIP 8149 / NCTC 11857 / SLCC 5334 / V8).